The primary structure comprises 118 residues: Fluoride-specific ion channel FluC 1 (118 aa).

A run of 4 helical transmembrane segments spans residues 5 to 25 (FVLV…ISVL), 34 to 54 (FPFA…FLVS), 56 to 76 (ALGP…YTTF), and 98 to 118 (YLGC…MLGV). Positions 71 and 74 each coordinate Na(+).

The protein belongs to the fluoride channel Fluc/FEX (TC 1.A.43) family.

The protein localises to the cell membrane. The catalysed reaction is fluoride(in) = fluoride(out). Its activity is regulated as follows. Na(+) is not transported, but it plays an essential structural role and its presence is essential for fluoride channel function. In terms of biological role, fluoride-specific ion channel. Important for reducing fluoride concentration in the cell, thus reducing its toxicity. This Listeria monocytogenes serotype 4b (strain F2365) protein is Fluoride-specific ion channel FluC 1.